The sequence spans 386 residues: Citrate synthase (386 aa).

Catalysis depends on residues histidine 266 and aspartate 322.

It belongs to the citrate synthase family.

It carries out the reaction oxaloacetate + acetyl-CoA + H2O = citrate + CoA + H(+). It functions in the pathway carbohydrate metabolism; tricarboxylic acid cycle; isocitrate from oxaloacetate: step 1/2. The polypeptide is Citrate synthase (gltA) (Acidithiobacillus ferridurans).